The sequence spans 156 residues: Small ribosomal subunit protein uS7A/uS7B (156 aa).

Belongs to the universal ribosomal protein uS7 family. As to quaternary structure, part of the 30S ribosomal subunit. Contacts proteins S9 and S11.

Functionally, one of the primary rRNA binding proteins, it binds directly to 16S rRNA where it nucleates assembly of the head domain of the 30S subunit. Is located at the subunit interface close to the decoding center, probably blocks exit of the E-site tRNA. The chain is Small ribosomal subunit protein uS7A/uS7B from Bartonella bacilliformis (strain ATCC 35685 / KC583 / Herrer 020/F12,63).